The sequence spans 336 residues: Apyrase (336 aa).

A signal peptide spans 1–21; the sequence is MFLKFCVVAFAICLSINLSEG. N-linked (GlcNAc...) asparagine glycosylation is present at Asn209.

This sequence belongs to the apyrase family. Ca(2+) is required as a cofactor. Salivary gland (at protein level).

The protein resides in the secreted. The catalysed reaction is a ribonucleoside 5'-triphosphate + 2 H2O = a ribonucleoside 5'-phosphate + 2 phosphate + 2 H(+). Facilitates hematophagy by inhibiting ADP- and collagen-dependent platelet aggregation in the host. Cleaves adenosine triphosphate (ATP) and adenosine diphosphate (ADP) to adenosine monophosphate (AMP) and inorganic phosphate in calcium-dependent manner. This is Apyrase from Phlebotomus duboscqi (Sandfly).